A 409-amino-acid chain; its full sequence is 5-aminolevulinate synthase (409 aa).

The substrate site is built by Arg-21 and Ser-136. Pyridoxal 5'-phosphate-binding residues include Ser-188, His-216, and Thr-244. The active site involves Lys-247. Lys-247 carries the post-translational modification N6-(pyridoxal phosphate)lysine. 2 residues coordinate pyridoxal 5'-phosphate: Thr-276 and Thr-277. Thr-362 provides a ligand contact to substrate.

The protein belongs to the class-II pyridoxal-phosphate-dependent aminotransferase family. Homodimer. It depends on pyridoxal 5'-phosphate as a cofactor.

It catalyses the reaction succinyl-CoA + glycine + H(+) = 5-aminolevulinate + CO2 + CoA. Its pathway is porphyrin-containing compound metabolism; protoporphyrin-IX biosynthesis; 5-aminolevulinate from glycine: step 1/1. This is 5-aminolevulinate synthase (hemA) from Bradyrhizobium diazoefficiens (strain JCM 10833 / BCRC 13528 / IAM 13628 / NBRC 14792 / USDA 110).